The chain runs to 140 residues: Nucleoside diphosphate kinase (140 aa).

ATP contacts are provided by K11, F59, R87, T93, R104, and N114. The active-site Pros-phosphohistidine intermediate is the H117.

Belongs to the NDK family. As to quaternary structure, homotetramer. Mg(2+) serves as cofactor.

It is found in the cytoplasm. The enzyme catalyses a 2'-deoxyribonucleoside 5'-diphosphate + ATP = a 2'-deoxyribonucleoside 5'-triphosphate + ADP. It carries out the reaction a ribonucleoside 5'-diphosphate + ATP = a ribonucleoside 5'-triphosphate + ADP. Functionally, major role in the synthesis of nucleoside triphosphates other than ATP. The ATP gamma phosphate is transferred to the NDP beta phosphate via a ping-pong mechanism, using a phosphorylated active-site intermediate. This chain is Nucleoside diphosphate kinase, found in Maricaulis maris (strain MCS10) (Caulobacter maris).